The sequence spans 273 residues: Dermonecrotic toxin LhSicTox-alphaIA2av (273 aa).

The active site involves His5. Mg(2+) is bound by residues Glu25 and Asp27. Catalysis depends on His41, which acts as the Nucleophile. Disulfide bonds link Cys45–Cys51 and Cys47–Cys190. Residue Asp85 participates in Mg(2+) binding.

It belongs to the arthropod phospholipase D family. Class II subfamily. The cofactor is Mg(2+). Expressed by the venom gland.

It localises to the secreted. The catalysed reaction is an N-(acyl)-sphingosylphosphocholine = an N-(acyl)-sphingosyl-1,3-cyclic phosphate + choline. It catalyses the reaction an N-(acyl)-sphingosylphosphoethanolamine = an N-(acyl)-sphingosyl-1,3-cyclic phosphate + ethanolamine. The enzyme catalyses a 1-acyl-sn-glycero-3-phosphocholine = a 1-acyl-sn-glycero-2,3-cyclic phosphate + choline. It carries out the reaction a 1-acyl-sn-glycero-3-phosphoethanolamine = a 1-acyl-sn-glycero-2,3-cyclic phosphate + ethanolamine. Dermonecrotic toxins cleave the phosphodiester linkage between the phosphate and headgroup of certain phospholipids (sphingolipid and lysolipid substrates), forming an alcohol (often choline) and a cyclic phosphate. This toxin acts on sphingomyelin (SM). It may also act on ceramide phosphoethanolamine (CPE), lysophosphatidylcholine (LPC) and lysophosphatidylethanolamine (LPE), but not on lysophosphatidylserine (LPS), and lysophosphatidylglycerol (LPG). It acts by transphosphatidylation, releasing exclusively cyclic phosphate products as second products. Induces dermonecrosis, hemolysis, increased vascular permeability, edema, inflammatory response, and platelet aggregation. This chain is Dermonecrotic toxin LhSicTox-alphaIA2av, found in Loxosceles hirsuta (Recluse spider).